A 331-amino-acid chain; its full sequence is Methionyl-tRNA formyltransferase (331 aa).

110–113 contacts (6S)-5,6,7,8-tetrahydrofolate; it reads SLLP. Residues 312–331 are disordered; that stretch reads HAPAERVSAAGSPAGAGGAP.

The protein belongs to the Fmt family.

The catalysed reaction is L-methionyl-tRNA(fMet) + (6R)-10-formyltetrahydrofolate = N-formyl-L-methionyl-tRNA(fMet) + (6S)-5,6,7,8-tetrahydrofolate + H(+). Functionally, attaches a formyl group to the free amino group of methionyl-tRNA(fMet). The formyl group appears to play a dual role in the initiator identity of N-formylmethionyl-tRNA by promoting its recognition by IF2 and preventing the misappropriation of this tRNA by the elongation apparatus. The polypeptide is Methionyl-tRNA formyltransferase (Frankia alni (strain DSM 45986 / CECT 9034 / ACN14a)).